The chain runs to 381 residues: Erythronate-4-phosphate dehydrogenase (381 aa).

2 residues coordinate substrate: Ser45 and Thr67. Residues 127-128, Asp147, and Thr176 contribute to the NAD(+) site; that span reads QV. Arg209 is a catalytic residue. Asp233 contributes to the NAD(+) binding site. Residue Glu238 is part of the active site. Residue His255 is the Proton donor of the active site. Gly258 is a binding site for NAD(+). A substrate-binding site is contributed by Tyr259.

The protein belongs to the D-isomer specific 2-hydroxyacid dehydrogenase family. PdxB subfamily. As to quaternary structure, homodimer.

The protein resides in the cytoplasm. The enzyme catalyses 4-phospho-D-erythronate + NAD(+) = (R)-3-hydroxy-2-oxo-4-phosphooxybutanoate + NADH + H(+). Its pathway is cofactor biosynthesis; pyridoxine 5'-phosphate biosynthesis; pyridoxine 5'-phosphate from D-erythrose 4-phosphate: step 2/5. Its function is as follows. Catalyzes the oxidation of erythronate-4-phosphate to 3-hydroxy-2-oxo-4-phosphonooxybutanoate. This Vibrio cholerae serotype O1 (strain ATCC 39315 / El Tor Inaba N16961) protein is Erythronate-4-phosphate dehydrogenase.